A 359-amino-acid polypeptide reads, in one-letter code: Innexin inx2 (359 aa).

At 1–22 (MFDVFGSVKGLLKLDSVCIDNN) the chain is on the cytoplasmic side. Residues 23-43 (LFRLHYKATVIILIAFSLLVT) form a helical membrane-spanning segment. The Extracellular portion of the chain corresponds to 44 to 109 (SRQYIGDPID…KDEVKYHKYY (66 aa)). The chain crosses the membrane as a helical span at residues 110-130 (QWVCFVLFFQAILFYIPRYLW). At 131–180 (KTWEGGRIKMLVLDLNSPVVNEQSKADRKKLLVDYFATNLHTQNFYAYRF) the chain is on the cytoplasmic side. The helical transmembrane segment at 181 to 201 (FICEALNFVNVVGQIYFMDLF) threads the bilayer. Over 202 to 266 (LDGEFTTYGS…VLPLNIVNEK (65 aa)) the chain is Extracellular. Residues 267–287 (IYVFLWFWFVILSVLTGIGLV) traverse the membrane as a helical segment. Over 288–359 (YRLATAMGPQ…AKKLEGKEIV (72 aa)) the chain is Cytoplasmic.

It belongs to the pannexin family. Widespread expression in embryo, in anterior and posterior row of neural precursors, midline precursors and in epithelial sheet of stomodeum.

It is found in the cell membrane. The protein localises to the cell junction. Its subcellular location is the gap junction. In terms of biological role, structural components of the gap junctions. This is Innexin inx2 (inx2) from Schistocerca americana (American grasshopper).